The following is a 267-amino-acid chain: MHEHSLFAPVPAAQHHDLLQQLAGVTAMQPNRIYERRLVFKPYRKPGYLKPRPGGSQDVQAPEVQRLNKMLNGGLYHVQVVGEVKLTDFGTHPSTVDATMGGTDFGNQHQNEYDISNQSWRIEFKDIPDAGTGSAVTSRLISTSRVPYGDIVPVMKAWGYDYVSEYVLEGDMFILDDTVILLHRILNFPAKHHLQGLPAFYLPPLQEMVPLDSTGGYLLQASITVQDSGNPDLMKATTQRLLGLKEHLKSAVRLESADRLSLDTRVK.

This sequence belongs to the Mediator complex subunit 18 family. Component of the Mediator complex.

The protein resides in the nucleus. Functionally, component of the Mediator complex, a coactivator involved in the regulated transcription of nearly all RNA polymerase II-dependent genes. Mediator functions as a bridge to convey information from gene-specific regulatory proteins to the basal RNA polymerase II transcription machinery. Mediator is recruited to promoters by direct interactions with regulatory proteins and serves as a scaffold for the assembly of a functional preinitiation complex with RNA polymerase II and the general transcription factors. This chain is Mediator of RNA polymerase II transcription subunit 18 (SRB5), found in Coccidioides immitis (strain RS) (Valley fever fungus).